A 331-amino-acid chain; its full sequence is Phospho-N-acetylmuramoyl-pentapeptide-transferase (331 aa).

The next 9 membrane-spanning stretches (helical) occupy residues 7-27, 54-74, 78-98, 106-126, 133-153, 154-174, 195-215, 249-269, and 311-331; these read IIYT…LTIP, TIGG…SGLI, LWIA…DDFI, LGLR…ILAI, IMGT…AGFT, ITQT…VVVA, IIAA…LAIF, AIAT…VGGI, and VVIV…LALS.

Belongs to the glycosyltransferase 4 family. MraY subfamily. Mg(2+) serves as cofactor.

The protein resides in the cell membrane. The enzyme catalyses UDP-N-acetyl-alpha-D-muramoyl-L-alanyl-gamma-D-glutamyl-meso-2,6-diaminopimeloyl-D-alanyl-D-alanine + di-trans,octa-cis-undecaprenyl phosphate = di-trans,octa-cis-undecaprenyl diphospho-N-acetyl-alpha-D-muramoyl-L-alanyl-D-glutamyl-meso-2,6-diaminopimeloyl-D-alanyl-D-alanine + UMP. It participates in cell wall biogenesis; peptidoglycan biosynthesis. Functionally, catalyzes the initial step of the lipid cycle reactions in the biosynthesis of the cell wall peptidoglycan: transfers peptidoglycan precursor phospho-MurNAc-pentapeptide from UDP-MurNAc-pentapeptide onto the lipid carrier undecaprenyl phosphate, yielding undecaprenyl-pyrophosphoryl-MurNAc-pentapeptide, known as lipid I. The chain is Phospho-N-acetylmuramoyl-pentapeptide-transferase from Alkaliphilus metalliredigens (strain QYMF).